A 300-amino-acid polypeptide reads, in one-letter code: NAD kinase (300 aa).

The active-site Proton acceptor is the Asp-75. Residues 75–76, 149–150, Arg-177, Asp-179, 190–195, Ala-214, and Gln-248 contribute to the NAD(+) site; these read DG, ND, and TAYALS.

The protein belongs to the NAD kinase family. Requires a divalent metal cation as cofactor.

It is found in the cytoplasm. The catalysed reaction is NAD(+) + ATP = ADP + NADP(+) + H(+). In terms of biological role, involved in the regulation of the intracellular balance of NAD and NADP, and is a key enzyme in the biosynthesis of NADP. Catalyzes specifically the phosphorylation on 2'-hydroxyl of the adenosine moiety of NAD to yield NADP. This chain is NAD kinase, found in Burkholderia ambifaria (strain MC40-6).